The sequence spans 600 residues: CBP80/20-dependent translation initiation factor (600 aa).

Methionine 1 carries the post-translational modification N-acetylmethionine. The segment covering 1-18 has biased composition (low complexity); that stretch reads MENSSAASASSEAGSSRS. Disordered stretches follow at residues 1-20, 43-62, 134-154, and 175-370; these read MENS…RSQE, DKTE…SQWT, KQPL…EDGD, and PHEA…SSPQ. Residues 1-305 form an interaction with NCBP1/CBP80 region; it reads MENSSAASAS…PPCSPDTLTP (305 aa). Serine 18 carries the post-translational modification Phosphoserine. The span at 52–62 shows a compositional bias: polar residues; the sequence is QRTQSHISQWT. Positions 139-152 are enriched in basic and acidic residues; it reads HIDREGCGKGKLED. Positions 183–198 are enriched in basic residues; it reads TKKLFRRRRNDRRRQQ. The segment covering 258 to 272 has biased composition (basic and acidic residues); that stretch reads PPGDKGEAGSHRNAK. Threonine 289 carries the post-translational modification Phosphothreonine. At serine 299 the chain carries Phosphoserine. Residues 321 to 339 show a composition bias toward basic and acidic residues; it reads AEIKHKDTVLPERLRERPK. Residues 378-579 form the MIF4G domain; the sequence is MEILNIMRNN…LEVIELHANS (202 aa).

The protein belongs to the CTIF family. In terms of assembly, interacts with NCBP1/CBP80; the interaction is direct. Associates with the eukaryotic translation initiation factor 3 (eIF-3) complex. In terms of tissue distribution, widely expressed.

It localises to the cytoplasm. The protein localises to the perinuclear region. Its function is as follows. Specifically required for the pioneer round of mRNA translation mediated by the cap-binding complex (CBC), that takes place during or right after mRNA export via the nuclear pore complex (NPC). Acts via its interaction with the NCBP1/CBP80 component of the CBC complex and recruits the 40S small subunit of the ribosome via eIF3. In contrast, it is not involved in steady state translation, that takes place when the CBC complex is replaced by cytoplasmic cap-binding protein eIF4E. Also required for nonsense-mediated mRNA decay (NMD), the pioneer round of mRNA translation mediated by the cap-binding complex playing a central role in nonsense-mediated mRNA decay (NMD). The protein is CBP80/20-dependent translation initiation factor (Ctif) of Mus musculus (Mouse).